The primary structure comprises 126 residues: Probable V-type proton ATPase subunit G (126 aa).

It belongs to the V-ATPase G subunit family. V-ATPase is a heteromultimeric enzyme made up of two complexes: the ATP-hydrolytic V1 complex and the proton translocation V0 complex. The V1 complex consists of three catalytic AB heterodimers that form a heterohexamer, three peripheral stalks each consisting of EG heterodimers, one central rotor including subunits D and F, and the regulatory subunits C and H. The proton translocation complex V0 consists of the proton transport subunit a, a ring of proteolipid subunits c9c'', rotary subunit d, subunits e and f, and the accessory subunits vah-19/Ac45 and vah-20/PRR. Interacts with ced-1.

Subunit of the V1 complex of vacuolar(H+)-ATPase (V-ATPase), a multisubunit enzyme composed of a peripheral complex (V1) that hydrolyzes ATP and a membrane integral complex (V0) that translocates protons. V-ATPase is responsible for acidifying and maintaining the pH of intracellular compartments and in some cell types, is targeted to the plasma membrane, where it is responsible for acidifying the extracellular environment. In neurons, required for necrotic cell death by promoting intracellular acidification. This Caenorhabditis elegans protein is Probable V-type proton ATPase subunit G.